The primary structure comprises 192 residues: E3 ubiquitin-protein ligase RNF183 (192 aa).

Topologically, residues 1 to 161 are cytoplasmic; it reads MAEQQGRELE…RECFRNPQFR (161 aa). Residues 13–60 form an RING-type zinc finger; the sequence is CPVCWNPFNNTFHTPKMLDCCHSFCVECLAHLSLVTPARRRLLCPLCR. The chain crosses the membrane as a helical; Anchor for type IV membrane protein span at residues 162–182; that stretch reads IFAYLMAVILSVTLLLIFSIF. The Lumenal portion of the chain corresponds to 183–192; the sequence is WTKQFLWGVG.

In terms of assembly, interacts with FATE1. Interacts with SEC16A. Interacts with BCL2L1. Autoubiquitinated (in vitro). Kidney and testis.

Its subcellular location is the endoplasmic reticulum membrane. The protein localises to the endoplasmic reticulum. It is found in the golgi apparatus. The protein resides in the cis-Golgi network membrane. It localises to the lysosome membrane. The catalysed reaction is S-ubiquitinyl-[E2 ubiquitin-conjugating enzyme]-L-cysteine + [acceptor protein]-L-lysine = [E2 ubiquitin-conjugating enzyme]-L-cysteine + N(6)-ubiquitinyl-[acceptor protein]-L-lysine.. It functions in the pathway protein modification; protein ubiquitination. Functionally, acts as an E3 ubiquitin ligase catalyzing the covalent attachment of ubiquitin moieties onto substrate proteins. Triggers apoptosis in response to prolonged ER stress by mediating the polyubiquitination and subsequent proteasomal degradation of BCL2L1. May collaborate with FATE1 to restrain BIK protein levels thus regulating apoptotic signaling. The protein is E3 ubiquitin-protein ligase RNF183 (RNF183) of Homo sapiens (Human).